The chain runs to 232 residues: Ribonuclease 3 (232 aa).

In terms of domain architecture, RNase III spans 6–133; that stretch reads FNDIENRLGV…VIAAVYLDKG (128 aa). E46 is a binding site for Mg(2+). Residue D50 is part of the active site. Residues D119 and E122 each contribute to the Mg(2+) site. E122 is a catalytic residue. The region spanning 160–229 is the DRBM domain; sequence DFKTKLQELL…AKEALKRLEK (70 aa).

Belongs to the ribonuclease III family. In terms of assembly, homodimer. Mg(2+) is required as a cofactor.

The protein localises to the cytoplasm. The catalysed reaction is Endonucleolytic cleavage to 5'-phosphomonoester.. Functionally, digests double-stranded RNA. Involved in the processing of primary rRNA transcript to yield the immediate precursors to the large and small rRNAs (23S and 16S). Processes some mRNAs, and tRNAs when they are encoded in the rRNA operon. Processes pre-crRNA and tracrRNA of type II CRISPR loci if present in the organism. The chain is Ribonuclease 3 from Clostridium botulinum (strain Alaska E43 / Type E3).